The following is a 409-amino-acid chain: Phosphopentomutase (409 aa).

Residues D10, D302, H307, D343, H344, and H355 each contribute to the Mn(2+) site.

It belongs to the phosphopentomutase family. It depends on Mn(2+) as a cofactor.

It is found in the cytoplasm. The enzyme catalyses 2-deoxy-alpha-D-ribose 1-phosphate = 2-deoxy-D-ribose 5-phosphate. The catalysed reaction is alpha-D-ribose 1-phosphate = D-ribose 5-phosphate. Its pathway is carbohydrate degradation; 2-deoxy-D-ribose 1-phosphate degradation; D-glyceraldehyde 3-phosphate and acetaldehyde from 2-deoxy-alpha-D-ribose 1-phosphate: step 1/2. Functionally, isomerase that catalyzes the conversion of deoxy-ribose 1-phosphate (dRib-1-P) and ribose 1-phosphate (Rib-1-P) to deoxy-ribose 5-phosphate (dRib-5-P) and ribose 5-phosphate (Rib-5-P), respectively. In Chelativorans sp. (strain BNC1), this protein is Phosphopentomutase.